The following is a 373-amino-acid chain: Leucine aminopeptidase 1 (373 aa).

The first 18 residues, 1–18 (MKFISVLALGATATSVLG), serve as a signal peptide directing secretion. Residues His176 and Asp195 each coordinate Zn(2+). Asn196 carries an N-linked (GlcNAc...) asparagine glycan. Residues Glu234 and Asp261 each coordinate Zn(2+). Asn286 carries N-linked (GlcNAc...) asparagine glycosylation. The cysteines at positions 310 and 314 are disulfide-linked. Residue His343 coordinates Zn(2+).

The protein belongs to the peptidase M28 family. M28E subfamily. In terms of assembly, monomer. Requires Zn(2+) as cofactor.

It is found in the secreted. Extracellular aminopeptidase which contributes to pathogenicity. This is Leucine aminopeptidase 1 (LAP1) from Arthroderma otae (strain ATCC MYA-4605 / CBS 113480) (Microsporum canis).